We begin with the raw amino-acid sequence, 309 residues long: Ribonuclease Z (309 aa).

Zn(2+) contacts are provided by His-64, His-66, Asp-68, His-69, His-141, Asp-209, and His-267. The Proton acceptor role is filled by Asp-68.

It belongs to the RNase Z family. In terms of assembly, homodimer. Zn(2+) serves as cofactor.

It catalyses the reaction Endonucleolytic cleavage of RNA, removing extra 3' nucleotides from tRNA precursor, generating 3' termini of tRNAs. A 3'-hydroxy group is left at the tRNA terminus and a 5'-phosphoryl group is left at the trailer molecule.. In terms of biological role, zinc phosphodiesterase, which displays some tRNA 3'-processing endonuclease activity. Probably involved in tRNA maturation, by removing a 3'-trailer from precursor tRNA. This chain is Ribonuclease Z, found in Picrophilus torridus (strain ATCC 700027 / DSM 9790 / JCM 10055 / NBRC 100828 / KAW 2/3).